The primary structure comprises 351 residues: Dihydroorotate dehydrogenase (quinone) (351 aa).

Residues 61–65 (AGLDK) and T85 each bind FMN. K65 serves as a coordination point for substrate. 110 to 114 (NRMGF) contributes to the substrate binding site. FMN is bound by residues N139 and N172. N172 lines the substrate pocket. The Nucleophile role is filled by S175. N177 provides a ligand contact to substrate. 2 residues coordinate FMN: K217 and T245. Residue 246 to 247 (NT) participates in substrate binding. FMN is bound by residues G268, G297, and 318-319 (YS).

The protein belongs to the dihydroorotate dehydrogenase family. Type 2 subfamily. As to quaternary structure, monomer. FMN is required as a cofactor.

It localises to the cell membrane. The enzyme catalyses (S)-dihydroorotate + a quinone = orotate + a quinol. It functions in the pathway pyrimidine metabolism; UMP biosynthesis via de novo pathway; orotate from (S)-dihydroorotate (quinone route): step 1/1. Catalyzes the conversion of dihydroorotate to orotate with quinone as electron acceptor. The sequence is that of Dihydroorotate dehydrogenase (quinone) from Xanthomonas axonopodis pv. citri (strain 306).